The primary structure comprises 125 residues: Large ribosomal subunit protein uL22 (125 aa).

Belongs to the universal ribosomal protein uL22 family. As to quaternary structure, part of the 50S ribosomal subunit.

Its function is as follows. This protein binds specifically to 23S rRNA; its binding is stimulated by other ribosomal proteins, e.g. L4, L17, and L20. It is important during the early stages of 50S assembly. It makes multiple contacts with different domains of the 23S rRNA in the assembled 50S subunit and ribosome. In terms of biological role, the globular domain of the protein is located near the polypeptide exit tunnel on the outside of the subunit, while an extended beta-hairpin is found that lines the wall of the exit tunnel in the center of the 70S ribosome. The polypeptide is Large ribosomal subunit protein uL22 (Thermobifida fusca (strain YX)).